Here is a 313-residue protein sequence, read N- to C-terminus: Fe-S cluster assembly protein dre2 (313 aa).

2 disordered regions span residues 1 to 25 (MSITIDTSVDIDLPTPPQSNGSQKR) and 151 to 187 (GRKKKDKTNGVNGVQNGVATNGASTNGVGMFDPAQNN). Residues 20–145 (NGSQKRNLLL…FEKPVQEAAV (126 aa)) are N-terminal SAM-like domain. A linker region spans residues 146–203 (PLKLGGRKKKDKTNGVNGVQNGVATNGASTNGVGMFDPAQNNDDELIDEDALLSDDDL). Polar residues predominate over residues 159–177 (NGVNGVQNGVATNGASTNG). C213, C225, C228, and C230 together coordinate [2Fe-2S] cluster. A fe-S binding site A region spans residues 213-230 (CVPETAKKRRRPCKDCTC). [4Fe-4S] cluster-binding residues include C276, C279, C287, and C290. 2 short sequence motifs (cx2C motif) span residues 276 to 279 (CNSC) and 287 to 290 (CSSC). The segment at 276-290 (CNSCSLGDAFRCSSC) is fe-S binding site B.

It belongs to the anamorsin family. Monomer. Interacts with tah18. Interacts with mia40. Requires [2Fe-2S] cluster as cofactor. [4Fe-4S] cluster serves as cofactor.

The protein resides in the cytoplasm. The protein localises to the mitochondrion intermembrane space. Its function is as follows. Component of the cytosolic iron-sulfur (Fe-S) protein assembly (CIA) machinery required for the maturation of extramitochondrial Fe-S proteins. Part of an electron transfer chain functioning in an early step of cytosolic Fe-S biogenesis, facilitating the de novo assembly of a [4Fe-4S] cluster on the scaffold complex cfd1-nbp35. Electrons are transferred to dre2 from NADPH via the FAD- and FMN-containing protein tah18. Tah18-dre2 are also required for the assembly of the diferric tyrosyl radical cofactor of ribonucleotide reductase (RNR), probably by providing electrons for reduction during radical cofactor maturation in the catalytic small subunit rnr2. The chain is Fe-S cluster assembly protein dre2 from Aspergillus flavus (strain ATCC 200026 / FGSC A1120 / IAM 13836 / NRRL 3357 / JCM 12722 / SRRC 167).